The sequence spans 531 residues: Tubulin-folding cofactor E (531 aa).

A CAP-Gly domain is found at Gly32–Arg76. LRR repeat units lie at residues Ile84 to Leu109, Leu159 to Glu183, Leu185 to Val213, Leu233 to Asp256, Phe260 to Gln284, Leu285 to Thr308, Phe318 to Gly342, Pro344 to Arg366, and Val474 to Gln497.

The protein belongs to the TBCE family. As to quaternary structure, supercomplex made of cofactors A to E. Cofactors A and D function by capturing and stabilizing tubulin in a quasi-native conformation. Cofactor E binds to the cofactor D-tubulin complex; interaction with cofactor C then causes the release of tubulin polypeptides that are committed to the native state.

Its subcellular location is the cytoplasm. Functionally, essential tubulin-folding protein involved in the tubulin folding pathway. Not essential for cell viability. Probably involved in the binding of alpha-tubulin in the multimeric supercomplex. This Arabidopsis thaliana (Mouse-ear cress) protein is Tubulin-folding cofactor E (TFCE).